A 227-amino-acid chain; its full sequence is Lipoprotein-releasing system ATP-binding protein LolD (227 aa).

The ABC transporter domain maps to 7–227 (LQLTGVERHY…TISDGKIVDF (221 aa)). 43–50 (APSGTGKS) contributes to the ATP binding site.

Belongs to the ABC transporter superfamily. Lipoprotein translocase (TC 3.A.1.125) family. In terms of assembly, the complex is composed of two ATP-binding proteins (LolD) and two transmembrane proteins (LolC and LolE).

The protein resides in the cell inner membrane. Functionally, part of the ABC transporter complex LolCDE involved in the translocation of mature outer membrane-directed lipoproteins, from the inner membrane to the periplasmic chaperone, LolA. Responsible for the formation of the LolA-lipoprotein complex in an ATP-dependent manner. In Rhizobium johnstonii (strain DSM 114642 / LMG 32736 / 3841) (Rhizobium leguminosarum bv. viciae), this protein is Lipoprotein-releasing system ATP-binding protein LolD.